The following is a 123-amino-acid chain: Protein HesB, vegetative (123 aa).

The protein belongs to the HesB/IscA family.

Functionally, may be required for efficient nitrogen fixation. The protein is Protein HesB, vegetative (hesB2) of Trichormus variabilis (strain ATCC 29413 / PCC 7937) (Anabaena variabilis).